Consider the following 210-residue polypeptide: Thymidylate kinase (210 aa).

10–17 (GPEGAGKS) contacts ATP.

It belongs to the thymidylate kinase family.

The catalysed reaction is dTMP + ATP = dTDP + ADP. Its function is as follows. Phosphorylation of dTMP to form dTDP in both de novo and salvage pathways of dTTP synthesis. The protein is Thymidylate kinase of Pseudomonas entomophila (strain L48).